Reading from the N-terminus, the 879-residue chain is DNA mismatch repair protein MutS (879 aa).

629 to 636 provides a ligand contact to ATP; that stretch reads GPNMGGKS.

The protein belongs to the DNA mismatch repair MutS family.

Functionally, this protein is involved in the repair of mismatches in DNA. It is possible that it carries out the mismatch recognition step. This protein has a weak ATPase activity. This Erythrobacter litoralis (strain HTCC2594) protein is DNA mismatch repair protein MutS.